Consider the following 382-residue polypeptide: Heme A synthase (382 aa).

8 consecutive transmembrane segments (helical) span residues 25–45, 112–132, 141–161, 176–196, 211–231, 270–290, 303–323, and 327–347; these read GAVRAWLYLLAVLVVAMVAVG, LLGRIVGLVFFLPFAWFWARG, GLLGLGLLGGLQGAIGWIMVA, LALHLTTASLILAGLVWLAAG, VVACLLPALVLVQIWLGGLVA, LALVQFNHRLFAYLVVAVAIA, AAAGRAMGVAALATAQMGLGI, and LLHVPLWAGLAHQVFAMAVLI. Histidine 277 is a heme binding site. Histidine 338 provides a ligand contact to heme.

This sequence belongs to the COX15/CtaA family. Type 2 subfamily. Interacts with CtaB. Heme b is required as a cofactor.

The protein resides in the cell membrane. The catalysed reaction is Fe(II)-heme o + 2 A + H2O = Fe(II)-heme a + 2 AH2. It functions in the pathway porphyrin-containing compound metabolism; heme A biosynthesis; heme A from heme O: step 1/1. In terms of biological role, catalyzes the conversion of heme O to heme A by two successive hydroxylations of the methyl group at C8. The first hydroxylation forms heme I, the second hydroxylation results in an unstable dihydroxymethyl group, which spontaneously dehydrates, resulting in the formyl group of heme A. This Methylorubrum extorquens (strain CM4 / NCIMB 13688) (Methylobacterium extorquens) protein is Heme A synthase.